Consider the following 87-residue polypeptide: Small ribosomal subunit protein eS21 (87 aa).

It belongs to the eukaryotic ribosomal protein eS21 family. As to quaternary structure, component of the small ribosomal subunit. Mature ribosomes consist of a small (40S) and a large (60S) subunit. The 40S subunit contains about 33 different proteins and 1 molecule of RNA (18S). The 60S subunit contains about 49 different proteins and 3 molecules of RNA (25S, 5.8S and 5S).

It is found in the cytoplasm. Its function is as follows. Required for the processing of the 20S rRNA-precursor to mature 18S rRNA in a late step of the maturation of 40S ribosomal subunits. Has a physiological role leading to 18S rRNA stability. The sequence is that of Small ribosomal subunit protein eS21 (RPS21) from Kluyveromyces lactis (strain ATCC 8585 / CBS 2359 / DSM 70799 / NBRC 1267 / NRRL Y-1140 / WM37) (Yeast).